Here is a 657-residue protein sequence, read N- to C-terminus: tRNA 5-methylaminomethyl-2-thiouridine biosynthesis bifunctional protein MnmC (657 aa).

A tRNA (mnm(5)s(2)U34)-methyltransferase region spans residues 1–238; it reads MPASTLLQHA…KWEVMSGEYT (238 aa). An FAD-dependent cmnm(5)s(2)U34 oxidoreductase region spans residues 265–657; that stretch reads IGAGLAGSAS…FGLRRLIRGK (393 aa).

In the N-terminal section; belongs to the methyltransferase superfamily. tRNA (mnm(5)s(2)U34)-methyltransferase family. The protein in the C-terminal section; belongs to the DAO family. It depends on FAD as a cofactor.

Its subcellular location is the cytoplasm. The catalysed reaction is 5-aminomethyl-2-thiouridine(34) in tRNA + S-adenosyl-L-methionine = 5-methylaminomethyl-2-thiouridine(34) in tRNA + S-adenosyl-L-homocysteine + H(+). Catalyzes the last two steps in the biosynthesis of 5-methylaminomethyl-2-thiouridine (mnm(5)s(2)U) at the wobble position (U34) in tRNA. Catalyzes the FAD-dependent demodification of cmnm(5)s(2)U34 to nm(5)s(2)U34, followed by the transfer of a methyl group from S-adenosyl-L-methionine to nm(5)s(2)U34, to form mnm(5)s(2)U34. The protein is tRNA 5-methylaminomethyl-2-thiouridine biosynthesis bifunctional protein MnmC of Pseudomonas putida (strain W619).